Here is a 438-residue protein sequence, read N- to C-terminus: uncharacterized protein (438 aa).

This is an uncharacterized protein from Encephalitozoon cuniculi (strain GB-M1) (Microsporidian parasite).